Here is a 410-residue protein sequence, read N- to C-terminus: Putative transporter AmpG 1 (410 aa).

The next 12 helical transmembrane spans lie at Leu-5 to Thr-25, Ile-40 to Phe-60, Leu-76 to Leu-96, Pro-98 to Met-118, Gly-141 to Leu-161, Glu-169 to Val-189, Ile-217 to Tyr-237, Val-265 to Met-285, Ile-290 to Ile-310, Leu-320 to Ile-340, Tyr-356 to Val-378, and Trp-383 to Leu-402.

The protein belongs to the major facilitator superfamily.

Its subcellular location is the cell inner membrane. The chain is Putative transporter AmpG 1 (ampG1) from Rickettsia bellii (strain RML369-C).